We begin with the raw amino-acid sequence, 316 residues long: PAK4-inhibitor inka1 (316 aa).

Residues 108-130 (YSEVSGSSLRGEEDDIVEEESET) form a disordered region. The span at 119–128 (EEDDIVEEES) shows a compositional bias: acidic residues. Inka box regions lie at residues 182 to 219 (DSQD…DLPE) and 289 to 316 (SDIA…AGFL).

This sequence belongs to the INKA family. Interacts with pak4/pak5.

It localises to the nucleus. It is found in the cytoplasm. In terms of biological role, inhibitor of the serine/threonine-protein kinase pak4/pak5. Acts by binding pak4/pak5 in a substrate-like manner, inhibiting the protein kinase activity. Required for the proper migration of neural crest cells during embryonic development, probably by inhibiting pak4/pak5. This chain is PAK4-inhibitor inka1, found in Xenopus laevis (African clawed frog).